The following is an 89-amino-acid chain: Gallinacin-13 (89 aa).

A signal peptide spans 1–23 (MRILQLLFAIVVILLLQDAPARG). 3 disulfide bridges follow: Cys-30-Cys-58, Cys-37-Cys-51, and Cys-41-Cys-59. The segment at 66-89 (PFSNPKHSVLHTAEQDPSPSLGGT) is disordered.

Belongs to the beta-defensin family. Expressed in the liver, gall bladder, kidney, small intestine, spleen, testis, ovary and male and female reproductive tracts. Not detected in the ovarian stroma and the theca and granulosa layers of the ovarian follicle.

It localises to the secreted. It is found in the cytoplasmic granule. In terms of biological role, has bactericidal activity. Potent activity against E.coli, L.monocytogenes, S.typhimurium and S.pyogenes but mot against S.aureus. Its function is as follows. Has bactericidal activity. The protein is Gallinacin-13 (GAL13) of Gallus gallus (Chicken).